A 356-amino-acid chain; its full sequence is tRNA pseudouridine synthase D (356 aa).

Asp84 acts as the Nucleophile in catalysis. The 144-residue stretch at 159-302 (GVPNYYGPQR…RRGARRPIRV (144 aa)) folds into the TRUD domain.

Belongs to the pseudouridine synthase TruD family.

It carries out the reaction uridine(13) in tRNA = pseudouridine(13) in tRNA. Responsible for synthesis of pseudouridine from uracil-13 in transfer RNAs. The protein is tRNA pseudouridine synthase D of Thermus thermophilus (strain ATCC BAA-163 / DSM 7039 / HB27).